Consider the following 1118-residue polypeptide: Isoleucine--tRNA ligase (1118 aa).

The short motif at 64–74 is the 'HIGH' region element; it reads PFANGLPHYGH. The short motif at 647-651 is the 'KMSKS' region element; it reads KLSKR. Position 650 (lysine 650) interacts with ATP.

The protein belongs to the class-I aminoacyl-tRNA synthetase family. IleS type 2 subfamily. In terms of assembly, monomer. The cofactor is Zn(2+).

The protein localises to the cytoplasm. The catalysed reaction is tRNA(Ile) + L-isoleucine + ATP = L-isoleucyl-tRNA(Ile) + AMP + diphosphate. In terms of biological role, catalyzes the attachment of isoleucine to tRNA(Ile). As IleRS can inadvertently accommodate and process structurally similar amino acids such as valine, to avoid such errors it has two additional distinct tRNA(Ile)-dependent editing activities. One activity is designated as 'pretransfer' editing and involves the hydrolysis of activated Val-AMP. The other activity is designated 'posttransfer' editing and involves deacylation of mischarged Val-tRNA(Ile). The sequence is that of Isoleucine--tRNA ligase from Ehrlichia ruminantium (strain Gardel).